Reading from the N-terminus, the 334-residue chain is Galactosylgalactosylxylosylprotein 3-beta-glucuronosyltransferase 1 (334 aa).

The Cytoplasmic portion of the chain corresponds to 1–6; it reads MPKRRD. Residues 3 to 5 form an essential for transport from endoplasmic reticulum to Golgi apparatus and interaction with SAR1A region; sequence KRR. The helical; Signal-anchor for type II membrane protein transmembrane segment at 7–27 threads the bilayer; it reads ILAIVLIVLPWTLLITVWHQS. Residues 28–334 lie on the Lumenal side of the membrane; sequence TLAPLLAVHK…KGFTDPSVEI (307 aa). Residues 37-56 form a disordered region; it reads KDEGSDPRRETPPGADPREY. UDP-alpha-D-glucuronate is bound at residue 91-93; the sequence is PTY. 2 positions are modified to phosphothreonine: Thr103 and Thr108. Asp122 contacts UDP-alpha-D-glucuronate. N-linked (GlcNAc...) asparagine glycosylation is present at Asn140. UDP-alpha-D-glucuronate-binding residues include Arg165 and Arg170. An N-linked (GlcNAc...) asparagine glycan is attached at Asn184. 195 to 197 is a binding site for UDP-alpha-D-glucuronate; sequence DDD. Asp197 lines the Mn(2+) pocket. The interaction with galactose moiety of substrate glycoprotein stretch occupies residues 245-254; the sequence is FDPHRPFAID. The active-site Proton donor/acceptor is the Glu284. Asn303 carries N-linked (GlcNAc...) asparagine glycosylation. 311–313 is a binding site for UDP-alpha-D-glucuronate; that stretch reads HTR.

Belongs to the glycosyltransferase 43 family. In terms of assembly, homodimer. Interacts with SAR1A. Mn(2+) is required as a cofactor. In terms of processing, the soluble form derives from the membrane form by proteolytic processing. As to expression, mainly expressed in the brain.

It localises to the golgi apparatus membrane. The protein localises to the secreted. Its subcellular location is the endoplasmic reticulum membrane. The catalysed reaction is 3-O-(beta-D-galactosyl-(1-&gt;3)-beta-D-galactosyl-(1-&gt;4)-beta-D-xylosyl)-L-seryl-[protein] + UDP-alpha-D-glucuronate = 3-O-(beta-D-GlcA-(1-&gt;3)-beta-D-Gal-(1-&gt;3)-beta-D-Gal-(1-&gt;4)-beta-D-Xyl)-L-seryl-[protein] + UDP + H(+). It functions in the pathway protein modification; protein glycosylation. Its function is as follows. Involved in the biosynthesis of L2/HNK-1 carbohydrate epitope on glycoproteins. Can also play a role in glycosaminoglycan biosynthesis. Substrates include asialo-orosomucoid (ASOR), asialo-fetuin, and asialo-neural cell adhesion molecule. Requires sphingomyelin for activity: stearoyl-sphingomyelin was the most effective, followed by palmitoyl-sphingomyelin and lignoceroyl-sphingomyelin. Activity was demonstrated only for sphingomyelin with a saturated fatty acid and not for that with an unsaturated fatty acid, regardless of the length of the acyl group. In Homo sapiens (Human), this protein is Galactosylgalactosylxylosylprotein 3-beta-glucuronosyltransferase 1.